Here is a 1854-residue protein sequence, read N- to C-terminus: PKS-NRPS hybrid synthetase ATPKS (1854 aa).

Residues 24 to 423 (FDQTQTRYSP…GRADTQIKIR (400 aa)) form an adenylation (A) domain region. In terms of domain architecture, Carrier 1 spans 523–598 (IPASTLTQQL…NLAAYLSDQT (76 aa)). Ser-558 carries the post-translational modification O-(pantetheine 4'-phosphoryl)serine. The Ketosynthase family 3 (KS3) domain occupies 617–1049 (GEDIAVISMA…GTNAHAIIEE (433 aa)). Residues Cys-791, His-926, and His-967 each act as for beta-ketoacyl synthase activity in the active site. Positions 1162 to 1496 (LFSGQGTERA…SLSDLHIRKV (335 aa)) are malonyl-CoA:ACP transacylase (MAT) domain. The segment at 1536–1556 (KSSGQPSGQSPSGCPQPTGQI) is disordered. The span at 1537 to 1555 (SSGQPSGQSPSGCPQPTGQ) shows a compositional bias: low complexity. The 76-residue stretch at 1776-1851 (MMLQGLVRGI…SLSDALQKQV (76 aa)) folds into the Carrier 2 domain. An O-(pantetheine 4'-phosphoryl)serine modification is found at Ser-1811.

It in the C-terminal section; belongs to the NRP synthetase family.

It participates in secondary metabolite biosynthesis. In terms of biological role, PKS-NRPS hybrid synthetase; part of the gene cluster that mediates the biosynthesis of pyrophen and campyrone B, which represent a class of fungal amino acid-derived alpha-pyrone natural products. The first step of pyrophen biosynthesis is catalyzed by the PKS-NRPS hybrid synthetase ATPKS that uptakes and condensates L-phenylalanine and malonyl-CoA in order to produce desmethyldesacetylpyrophen. Although the A domain does not discriminate between 2 enantiomeric phenylalanines, the downstream KS domain must play a gate keeping role to stereoselectively accept the L-phenylalanyl-S-phosphopantetheine (Ppant)-T domain intermediate for chain elongation. The resulting amino acid derived diketide is off-loaded through lactonization to yield the alpha-pyrone intermediate desmethyldesacetylpyrophen. The cluster-specific O-methyltransferase (OMT) then methylates desmethyldesacetylpyrophen to desacetylpyrophen, which is further acetylated to pyrophen by an endogenous yet unidentified N-acetyltransferase. ATPKS has relaxed substrate specificity to activate and extend branched-chain amino acid L-leucine to produce small amounts of campyrone B. In Aspergillus niger (strain ATCC 1015 / CBS 113.46 / FGSC A1144 / LSHB Ac4 / NCTC 3858a / NRRL 328 / USDA 3528.7), this protein is PKS-NRPS hybrid synthetase ATPKS.